A 212-amino-acid polypeptide reads, in one-letter code: Dephospho-CoA kinase (212 aa).

Positions 3–204 (ILGLTGSIGM…GSRPAAPVGG (202 aa)) constitute a DPCK domain. Residue 11–16 (GMGKST) participates in ATP binding.

It belongs to the CoaE family.

The protein localises to the cytoplasm. It catalyses the reaction 3'-dephospho-CoA + ATP = ADP + CoA + H(+). Its pathway is cofactor biosynthesis; coenzyme A biosynthesis; CoA from (R)-pantothenate: step 5/5. Catalyzes the phosphorylation of the 3'-hydroxyl group of dephosphocoenzyme A to form coenzyme A. This is Dephospho-CoA kinase from Paramagnetospirillum magneticum (strain ATCC 700264 / AMB-1) (Magnetospirillum magneticum).